Consider the following 216-residue polypeptide: Ras-related protein RABA1a (216 aa).

20-27 (GDSGVGKS) is a binding site for GTP. An Effector region motif is present at residues 42–50 (SKSTIGVEF). Residues 68-72 (DTAGQ), 126-129 (NKCD), and 156-157 (SA) contribute to the GTP site. Residues C213 and C214 are each lipidated (S-geranylgeranyl cysteine).

Belongs to the small GTPase superfamily. Rab family.

It is found in the cell membrane. Involved in auxin-mediated response. May be involved in vesicle trafficking of components involved in polar auxin transport. Binds GTP and GDP and possesses intrinsic GTPase activity. In Arabidopsis thaliana (Mouse-ear cress), this protein is Ras-related protein RABA1a (RABA1A).